A 92-amino-acid polypeptide reads, in one-letter code: Small ribosomal subunit protein uS19 (92 aa).

This sequence belongs to the universal ribosomal protein uS19 family.

Its function is as follows. Protein S19 forms a complex with S13 that binds strongly to the 16S ribosomal RNA. The chain is Small ribosomal subunit protein uS19 from Lactococcus lactis subsp. lactis (strain IL1403) (Streptococcus lactis).